A 179-amino-acid polypeptide reads, in one-letter code: MNKLFVLLIALLGLTAAMRDQSIAVKGRLLCGNGPAANVRVKLWEEDTGPDPDDLLDQGYTDANGEFSLQGGTAELTPIDPVFKVYHKCDDSKLKPGARKVKLALPKSYITSGKVAKKTFDIGVLNLETVFAKEERELLVSRRRRGGFNADYMDPDNSEKDQSKSSEESEDKEKTVETF.

The N-terminal stretch at 1-17 (MNKLFVLLIALLGLTAA) is a signal peptide. Positions 144–179 (RRGGFNADYMDPDNSEKDQSKSSEESEDKEKTVETF) are disordered. Residues 157–179 (NSEKDQSKSSEESEDKEKTVETF) are compositionally biased toward basic and acidic residues.

The protein belongs to the nematode transthyretin-like family.

It localises to the secreted. The protein is Transthyretin-like protein 46 (ttr-46) of Caenorhabditis elegans.